The sequence spans 94 residues: Large ribosomal subunit protein uL23c (94 aa).

The protein belongs to the universal ribosomal protein uL23 family. As to quaternary structure, part of the 50S ribosomal subunit.

The protein resides in the plastid. The protein localises to the chloroplast. In terms of biological role, binds to 23S rRNA. The protein is Large ribosomal subunit protein uL23c (rpl23) of Tupiella akineta (Green alga).